Here is a 277-residue protein sequence, read N- to C-terminus: Putative protease slr0021 (277 aa).

Serine 85 (nucleophile) is an active-site residue. Lysine 137 (proton donor/acceptor) is an active-site residue.

Belongs to the peptidase S49 family.

The chain is Putative protease slr0021 from Synechocystis sp. (strain ATCC 27184 / PCC 6803 / Kazusa).